A 1420-amino-acid chain; its full sequence is Protein NPAT (1420 aa).

The segment at 1-319 (MLLPSDVARL…EEAIQDILEQ (319 aa)) is interaction with MIZF. In terms of domain architecture, LisH spans 3-35 (LPSDVARLVLGYLQQENLTSTCQTFILESSNLK). 2 required for activation of histone gene transcription and interaction with MIZF regions span residues 5–25 (SDVA…STCQ) and 121–145 (KRQR…YASG). Residues 179–190 (QPQSTVTNTAGE) show a composition bias toward polar residues. The tract at residues 179 to 236 (QPQSTVTNTAGESLNIIPGPQERKTQTSLMSPGRRKSESQKKSLTSSGPHSSRNFQDP) is disordered. Position 209 is a phosphoserine (Ser-209). Polar residues predominate over residues 220 to 235 (KSLTSSGPHSSRNFQD). Residues 263 to 339 (KLAENINKFL…FDLFDYGKTK (77 aa)) form a mediates transcriptional activation region. Over residues 534 to 573 (SQSTPLTTKPSKSQLCENSNNIIKVKTNPQASESADSSET) the composition is skewed to polar residues. 3 disordered regions span residues 534-612 (SQST…GESL), 625-670 (EEPA…KDGD), and 696-727 (KNNN…NSTE). Phosphoserine is present on residues Ser-552 and Ser-598. The tract at residues 628 to 652 (APSDKQLSNDAASVDLNPTESKTEP) is required for acceleration of G1 phase. A compositionally biased stretch (polar residues) spans 632–658 (KQLSNDAASVDLNPTESKTEPLQSASA). Low complexity predominate over residues 697–712 (NNNSLSSESGGSVGVS). Positions 713–727 (PETQNTDGKTSNSTE) are enriched in polar residues. Phosphoserine; by CDK2 occurs at positions 771 and 773. Required for acceleration of G1 phase stretches follow at residues 822–847 (QNED…IQLM) and 1033–1048 (KMED…RVAP). 3 disordered regions span residues 1089–1190 (ASFS…NGSL), 1202–1234 (LTKK…KPAS), and 1249–1297 (SPAN…SMPR). Ser-1096 bears the Phosphoserine; by CDK2 mark. Glycyl lysine isopeptide (Lys-Gly) (interchain with G-Cter in SUMO2) cross-links involve residues Lys-1112 and Lys-1144. Composition is skewed to basic and acidic residues over residues 1135-1146 (TVKEVQSEKKVS) and 1154-1177 (SLHK…KNAD). Ser-1146 is modified (phosphoserine). Over residues 1205–1219 (KQATPSNNKNATSVG) the composition is skewed to polar residues. The residue at position 1223 (Lys-1223) is an N6-acetyllysine. The required for acceleration of G1 phase stretch occupies residues 1223–1247 (KDQKQEQSKPASSLIGAEILQDVPI). Ser-1249 carries the post-translational modification Phosphoserine. Thr-1264 is modified (phosphothreonine; by CDK2). The segment covering 1270 to 1279 (GEKHKEEPSD) has biased composition (basic and acidic residues). Lys-1274 participates in a covalent cross-link: Glycyl lysine isopeptide (Lys-Gly) (interchain with G-Cter in SUMO2). The required for acceleration of G1 phase stretch occupies residues 1319 to 1342 (ENSVSMAAHTLMILSRAAIARTTA). Thr-1343 carries the post-translational modification Phosphothreonine; by CDK2. The segment at 1348–1400 (NTQQFRTSSRSTTKKRKIEELDECERNSRTSGKNLANSSVPMKKKKIKKKKLP) is disordered. Polar residues predominate over residues 1376–1387 (RTSGKNLANSSV). Over residues 1389 to 1399 (MKKKKIKKKKL) the composition is skewed to basic residues.

This sequence belongs to the NPAT family. In terms of assembly, interacts with the cylin/CDK complexes CCNE1/CDK2 and CCNA1/CDK2. Interacts with BZW1, CASP8AP2, CREBBP, MIZF and YY1. Interacts with the RUVBL1, RUVBL2 and TRRAP subunits of the NuA4 complex. May also interact with GAPDH, NME1, NME2 and STIP1. Post-translationally, phosphorylated at Ser-771, Ser-773, Ser-1096, Thr-1264 and Thr-1343 by CCNE1/CDK2 at G1-S transition and until prophase, which promotes association with histone gene clusters and stimulates activation of histone transcription. Also phosphorylated by CCNA1/CDK2 in vitro.

The protein localises to the nucleus. Its function is as follows. Required for progression through the G1 and S phases of the cell cycle and for S phase entry. Activates transcription of the histone H2A, histone H2B, histone H3 and histone H4 genes in conjunction with MIZF. Also positively regulates the ATM, MIZF and PRKDC promoters. Transcriptional activation may be accomplished at least in part by the recruitment of the NuA4 histone acetyltransferase (HAT) complex to target gene promoters. Required for early embryonic development. This Mus musculus (Mouse) protein is Protein NPAT (Npat).